The sequence spans 343 residues: Anthranilate phosphoribosyltransferase (343 aa).

Residues Gly-78, 81–82 (GD), Thr-86, 88–91 (NIST), 106–114 (KHGNRSVSS), and Ser-118 each bind 5-phospho-alpha-D-ribose 1-diphosphate. Residue Gly-78 coordinates anthranilate. Position 90 (Ser-90) interacts with Mg(2+). Residue Asn-109 participates in anthranilate binding. Position 164 (Arg-164) interacts with anthranilate. Residues Asp-223 and Glu-224 each coordinate Mg(2+).

It belongs to the anthranilate phosphoribosyltransferase family. In terms of assembly, homodimer. Requires Mg(2+) as cofactor.

It catalyses the reaction N-(5-phospho-beta-D-ribosyl)anthranilate + diphosphate = 5-phospho-alpha-D-ribose 1-diphosphate + anthranilate. It functions in the pathway amino-acid biosynthesis; L-tryptophan biosynthesis; L-tryptophan from chorismate: step 2/5. Functionally, catalyzes the transfer of the phosphoribosyl group of 5-phosphorylribose-1-pyrophosphate (PRPP) to anthranilate to yield N-(5'-phosphoribosyl)-anthranilate (PRA). This is Anthranilate phosphoribosyltransferase from Chlamydia felis (strain Fe/C-56) (Chlamydophila felis).